Reading from the N-terminus, the 367-residue chain is 3-dehydroquinate synthase (367 aa).

NAD(+) contacts are provided by residues 69–74 (DGEAFK), 103–107 (GVVGD), 127–128 (TT), Lys140, Lys149, and 167–170 (TLAT). Glu182, His245, and His262 together coordinate Zn(2+).

The protein belongs to the sugar phosphate cyclases superfamily. Dehydroquinate synthase family. It depends on Co(2+) as a cofactor. Requires Zn(2+) as cofactor. NAD(+) is required as a cofactor.

It localises to the cytoplasm. The catalysed reaction is 7-phospho-2-dehydro-3-deoxy-D-arabino-heptonate = 3-dehydroquinate + phosphate. It functions in the pathway metabolic intermediate biosynthesis; chorismate biosynthesis; chorismate from D-erythrose 4-phosphate and phosphoenolpyruvate: step 2/7. Functionally, catalyzes the conversion of 3-deoxy-D-arabino-heptulosonate 7-phosphate (DAHP) to dehydroquinate (DHQ). The polypeptide is 3-dehydroquinate synthase (Azotobacter vinelandii (strain DJ / ATCC BAA-1303)).